A 327-amino-acid chain; its full sequence is MEAIKGSDVNVPDAVFAWMLDGRGGVKPLENTDVIDEAHPCWLHLNYVHHDSAQWLATTPLLPNNVRDALAGESTRPRVSRFGEGTLITLRCINGSTDERPDQLVAMRVYMDGRLIVSTRQRKVLALDDVVSDLEEGTGPTDCGGWLVDVCDALTDHSSEFIEQLHDKIIDLEDNLLDQQIPPRGFLALLRKQLIVMRRYMAPQRDVYARLASERLPWMSDDQRRRMQDIADRLGRGLDEIDACIARTGVMADEIAQVMQENLARRTYTMSLMAMVFLPSTFLTGLFGVNLGGIPGGGWQFGFSIFCILLVVLIGGVALWLYRSKWL.

At Met-1–Met-273 the chain is on the cytoplasmic side. The helical transmembrane segment at Ala-274–Ile-294 threads the bilayer. Residues Pro-295–Gln-300 lie on the Periplasmic side of the membrane. Residues Phe-301–Leu-321 traverse the membrane as a helical segment. Residues Tyr-322–Leu-327 are Cytoplasmic-facing.

Belongs to the CorA metal ion transporter (MIT) (TC 1.A.35) family.

It is found in the cell inner membrane. The catalysed reaction is Zn(2+)(out) + H(+)(out) = Zn(2+)(in) + H(+)(in). In terms of biological role, zinc transporter. Acts as a Zn(2+):proton symporter, which likely mediates zinc ion uptake. The protein is Zinc transport protein ZntB of Shigella flexneri serotype 5b (strain 8401).